The primary structure comprises 129 residues: Fluoride-specific ion channel FluC 1 (129 aa).

The next 3 membrane-spanning stretches (helical) occupy residues 43–63, 68–88, and 100–120; these read ASLLLGLVAGAAGAGAPPAWV, VVSLVGTGLCGALSTYSTFSY, and LLAAANVAGSVLAAFGAAALG. Residues Gly-78 and Ser-81 each coordinate Na(+).

The protein belongs to the fluoride channel Fluc/FEX (TC 1.A.43) family.

The protein resides in the cell membrane. It catalyses the reaction fluoride(in) = fluoride(out). With respect to regulation, na(+) is not transported, but it plays an essential structural role and its presence is essential for fluoride channel function. Its function is as follows. Fluoride-specific ion channel. Important for reducing fluoride concentration in the cell, thus reducing its toxicity. The polypeptide is Fluoride-specific ion channel FluC 1 (Frankia casuarinae (strain DSM 45818 / CECT 9043 / HFP020203 / CcI3)).